The following is a 67-amino-acid chain: Small integral membrane protein 20 (67 aa).

The Mitochondrial matrix portion of the chain corresponds to 1 to 6 (MSRNLR). The helical transmembrane segment at 7 to 27 (TALIFGGFISLIGAAFYPIYF) threads the bilayer. At 28–67 (RPLMRLEEYKKEQAINRAGIVQEDVQPPGLKVWSDPFGRK) the chain is on the mitochondrial intermembrane side. Phenylalanine amide is present on F64.

Component of the MITRAC (mitochondrial translation regulation assembly intermediate of cytochrome c oxidase complex) complex, the core components of this complex being COA3/MITRAC12 and COX14. Interacts with COA3/MITRAC12 and COX4I1. Directly interacts with newly synthesized MT-CO1/COX1. Expressed in the ovary, specifically in granulosa cells of follicles that have passed the primary stage and in oocytes (at protein level).

It localises to the mitochondrion inner membrane. It is found in the secreted. Component of the MITRAC (mitochondrial translation regulation assembly intermediate of cytochrome c oxidase complex) complex, that regulates cytochrome c oxidase assembly. Promotes the progression of complex assembly after the association of MT-CO1/COX1 with COX4I1 and COX6C. Chaperone-like assembly factor required to stabilize newly synthesized MT-CO1/COX1 and to prevent its premature turnover. In terms of biological role, peptide involved in a broad spectrum of regulatory functions. Is a ligand for GPR173. As part of the reproductive cycle, it regulates gonadotropin-releasing hormone (GnRH) signaling in the hypothalamus and pituitary gland which augments the release of luteinizing hormone. Plays a protective role in memory retention through activation of GNRHR. Regulates the secretion of AVP by hypothalamic neurons. Plays a role in the transduction of the itch sensation. Induces anxiolytic effects, reducing behavior associated with anxiety. Regulates food intake as well as satiation and satiety. In the ovary, it regulates follicular growth by stimulating granulosa cell proliferation by increasing the expression of GPR173, CREB1, CYP19A1, KITLG, FSHR, and LHCGR. It also increases the production of estradiol (E2). In the heart, it regulates contractility and relaxation. It also plays a cardioprotective role during ischemia, where it activates the SAFE and RISK pathways. Stimulates the proliferation and differentiation of preadipocytes. In pancreatic islet cells, it induces proliferation of islet cells as well as the production of INS. The polypeptide is Small integral membrane protein 20 (SMIM20) (Homo sapiens (Human)).